A 387-amino-acid chain; its full sequence is 3-ketoacyl-CoA thiolase (387 aa).

The Acyl-thioester intermediate role is filled by cysteine 91. Residues histidine 343 and cysteine 373 each act as proton acceptor in the active site.

Belongs to the thiolase-like superfamily. Thiolase family. In terms of assembly, heterotetramer of two alpha chains (FadB) and two beta chains (FadA).

It localises to the cytoplasm. The enzyme catalyses an acyl-CoA + acetyl-CoA = a 3-oxoacyl-CoA + CoA. Its pathway is lipid metabolism; fatty acid beta-oxidation. Functionally, catalyzes the final step of fatty acid oxidation in which acetyl-CoA is released and the CoA ester of a fatty acid two carbons shorter is formed. The sequence is that of 3-ketoacyl-CoA thiolase from Shigella boydii serotype 4 (strain Sb227).